We begin with the raw amino-acid sequence, 236 residues long: Leucyl/phenylalanyl-tRNA--protein transferase (236 aa).

It belongs to the L/F-transferase family.

The protein resides in the cytoplasm. It carries out the reaction N-terminal L-lysyl-[protein] + L-leucyl-tRNA(Leu) = N-terminal L-leucyl-L-lysyl-[protein] + tRNA(Leu) + H(+). The enzyme catalyses N-terminal L-arginyl-[protein] + L-leucyl-tRNA(Leu) = N-terminal L-leucyl-L-arginyl-[protein] + tRNA(Leu) + H(+). The catalysed reaction is L-phenylalanyl-tRNA(Phe) + an N-terminal L-alpha-aminoacyl-[protein] = an N-terminal L-phenylalanyl-L-alpha-aminoacyl-[protein] + tRNA(Phe). Functionally, functions in the N-end rule pathway of protein degradation where it conjugates Leu, Phe and, less efficiently, Met from aminoacyl-tRNAs to the N-termini of proteins containing an N-terminal arginine or lysine. The protein is Leucyl/phenylalanyl-tRNA--protein transferase of Shewanella oneidensis (strain ATCC 700550 / JCM 31522 / CIP 106686 / LMG 19005 / NCIMB 14063 / MR-1).